The following is a 249-amino-acid chain: Acidic leucine-rich nuclear phosphoprotein 32 family member A (249 aa).

Phosphothreonine is present on threonine 15. Serine 17 carries the post-translational modification Phosphoserine. LRR repeat units follow at residues 18–38 (DVKELVLDNSRSNEGKLEGLT), 43–64 (ELEFLSTINVGLTSIANLPKLN), 65–87 (KLKKLELSDNRVSGGLEVLAEKC), and 89–110 (NLTHLNLSGNKIKDLSTIEPLK). The 39-residue stretch at 123–161 (CEVTNLNDYRENVFKLLPQLTYLDGYDRDDKEAPDSDAE) folds into the LRRCT domain. A compositionally biased stretch (basic and acidic residues) spans 147–156 (GYDRDDKEAP). The tract at residues 147 to 249 (GYDRDDKEAP…EPEDEGEDDD (103 aa)) is disordered. The interval 150-174 (RDDKEAPDSDAEGYVEGLDDEEEDE) is necessary for tumor-suppressive function. Acidic residues predominate over residues 157–230 (DSDAEGYVEG…DEEDEEELGE (74 aa)). A phosphoserine; by CK2 mark is found at serine 158 and serine 204. An interaction with E4F1 region spans residues 165 to 249 (EGLDDEEEDE…EPEDEGEDDD (85 aa)).

It belongs to the ANP32 family. Component of the SET complex, composed of at least ANP32A, APEX1, HMGB2, NME1, SET and TREX1. Directly interacts with SET. Interacts with ATXN1/SCA1. Interacts with MAP1B. Interacts with ELAVL1. Part of the INHAT (inhibitor of histone acetyltransferases) complex. Interacts with E4F1. As to quaternary structure, (Microbial infection) Interacts (via C-terminus) with influenza virus A protein PB2; this interaction promotes viral replication. In terms of assembly, (Microbial infection) Interacts (via C-terminus) with influenza virus B protein PB2; this interaction promotes viral replication. (Microbial infection) Interacts (via C-terminus) with influenza virus C protein PB2; this interaction promotes viral replication by bridging viral replicase dimers together. In terms of processing, phosphorylated on serine residues, at least in part by casein kinase 2/CK2. The N-terminus is blocked. Post-translationally, some glutamate residues are glycylated by TTLL8. This modification occurs exclusively on glutamate residues and results in a glycine chain on the gamma-carboxyl group. As to expression, expressed in all tissues tested. Highly expressed in kidney and skeletal muscle, moderate levels of expression in brain, placenta and pancreas, and weakly expressed in lung. Found in all regions of the brain examined (amygdala, caudate nucleus, corpus callosum, hippocampus and thalamus), with highest levels in amygdala.

It localises to the nucleus. It is found in the cytoplasm. The protein resides in the endoplasmic reticulum. Multifunctional protein that is involved in the regulation of many processes including tumor suppression, apoptosis, cell cycle progression or transcription. Promotes apoptosis by favouring the activation of caspase-9/CASP9 and allowing apoptosome formation. In addition, plays a role in the modulation of histone acetylation and transcription as part of the INHAT (inhibitor of histone acetyltransferases) complex. Inhibits the histone-acetyltranferase activity of EP300/CREBBP (CREB-binding protein) and EP300/CREBBP-associated factor by histone masking. Preferentially binds to unmodified histone H3 and sterically inhibiting its acetylation and phosphorylation leading to cell growth inhibition. Participates in other biochemical processes such as regulation of mRNA nuclear-to-cytoplasmic translocation and stability by its association with ELAVL1 (Hu-antigen R). Plays a role in E4F1-mediated transcriptional repression as well as inhibition of protein phosphatase 2A. In terms of biological role, (Microbial infection) Plays an essential role in influenza A, B and C viral genome replication. Mechanistically, mediates the assembly of the viral replicase asymmetric dimers composed of PB1, PB2 and PA via its N-terminal region. Also plays an essential role in foamy virus mRNA export from the nucleus. The protein is Acidic leucine-rich nuclear phosphoprotein 32 family member A (ANP32A) of Homo sapiens (Human).